Reading from the N-terminus, the 378-residue chain is N-acetyldiaminopimelate deacetylase (378 aa).

D72 is an active-site residue. Catalysis depends on E131, which acts as the Proton acceptor.

Belongs to the peptidase M20A family. N-acetyldiaminopimelate deacetylase subfamily.

The catalysed reaction is N-acetyl-(2S,6S)-2,6-diaminopimelate + H2O = (2S,6S)-2,6-diaminopimelate + acetate. It participates in amino-acid biosynthesis; L-lysine biosynthesis via DAP pathway; LL-2,6-diaminopimelate from (S)-tetrahydrodipicolinate (acetylase route): step 3/3. Catalyzes the conversion of N-acetyl-diaminopimelate to diaminopimelate and acetate. The chain is N-acetyldiaminopimelate deacetylase from Enterococcus faecalis (strain ATCC 700802 / V583).